The sequence spans 246 residues: Mediator of RNA polymerase II transcription subunit 6 (246 aa).

2 disordered regions span residues 165–186 (MKKKEEEKKEEDERKLEERSTN) and 207–246 (EALEKLDVKEEENPKPEEAPSASAVGEPKFAEPAARATTK). Basic and acidic residues-rich tracts occupy residues 166–184 (KKKEEEKKEEDERKLEERS) and 208–224 (ALEKLDVKEEENPKPEE).

Belongs to the Mediator complex subunit 6 family. As to quaternary structure, component of the Mediator complex. Interacts with let-19/mdt-13. Interacts with RNA polymerase II. Interacts with mdt-28.

The protein resides in the nucleus. Functionally, component of the Mediator complex, a coactivator involved in the regulated transcription of nearly all RNA polymerase II-dependent genes. Mediator functions as a bridge to convey information from gene-specific regulatory proteins to the basal RNA polymerase II transcription machinery. Mediator is recruited to promoters by direct interactions with regulatory proteins and serves as a scaffold for the assembly of a functional preinitiation complex with RNA polymerase II and the general transcription factors. This is Mediator of RNA polymerase II transcription subunit 6 (mdt-6) from Caenorhabditis briggsae.